Consider the following 159-residue polypeptide: Single-stranded DNA-binding protein 2 (159 aa).

Residues 2–104 form the SSB domain; it reads MNRVVLVGRL…VVAESVQFLE (103 aa). Residues 106–159 form a disordered region; the sequence is RNHAEGATSNNYQNEANYSNNNKTSSYRADTSQKSDSFANEGKPIDINPDDLPF. The segment covering 114 to 127 has biased composition (low complexity); it reads SNNYQNEANYSNNN. The segment covering 128–143 has biased composition (polar residues); sequence KTSSYRADTSQKSDSF.

In terms of assembly, homotetramer.

The polypeptide is Single-stranded DNA-binding protein 2 (ssb2) (Listeria innocua serovar 6a (strain ATCC BAA-680 / CLIP 11262)).